The sequence spans 292 residues: Shikimate dehydrogenase (NADP(+)) (292 aa).

Residues 25–27 (SKS) and Thr72 each bind shikimate. Residue Lys76 is the Proton acceptor of the active site. Positions 97 and 113 each coordinate shikimate. NADP(+)-binding positions include 137 to 141 (GAGGA), 161 to 166 (NRTQSK), and Met230. Residue Tyr232 participates in shikimate binding. Gly254 serves as a coordination point for NADP(+).

This sequence belongs to the shikimate dehydrogenase family. Homodimer.

The enzyme catalyses shikimate + NADP(+) = 3-dehydroshikimate + NADPH + H(+). Its pathway is metabolic intermediate biosynthesis; chorismate biosynthesis; chorismate from D-erythrose 4-phosphate and phosphoenolpyruvate: step 4/7. Functionally, involved in the biosynthesis of the chorismate, which leads to the biosynthesis of aromatic amino acids. Catalyzes the reversible NADPH linked reduction of 3-dehydroshikimate (DHSA) to yield shikimate (SA). The chain is Shikimate dehydrogenase (NADP(+)) from Shewanella sp. (strain MR-4).